Reading from the N-terminus, the 150-residue chain is 3-dehydroquinate dehydratase (150 aa).

Catalysis depends on Tyr-26, which acts as the Proton acceptor. Asn-77, His-83, and Asp-90 together coordinate substrate. The active-site Proton donor is the His-103. Residues Leu-104–Ser-105 and Arg-114 each bind substrate.

This sequence belongs to the type-II 3-dehydroquinase family. As to quaternary structure, homododecamer.

The catalysed reaction is 3-dehydroquinate = 3-dehydroshikimate + H2O. It functions in the pathway metabolic intermediate biosynthesis; chorismate biosynthesis; chorismate from D-erythrose 4-phosphate and phosphoenolpyruvate: step 3/7. Its function is as follows. Catalyzes a trans-dehydration via an enolate intermediate. This Enterobacter sp. (strain 638) protein is 3-dehydroquinate dehydratase.